A 1385-amino-acid chain; its full sequence is Probable serine/threonine-protein kinase DDB_G0268876 (1385 aa).

Positions 758 to 1008 (LELTKEIGRG…QQIITYLENL (251 aa)) constitute a Protein kinase domain. ATP is bound by residues 764-772 (IGRGVSGVV) and K785. D878 (proton acceptor) is an active-site residue. 3 disordered regions span residues 1040 to 1074 (GGNS…ENKI), 1091 to 1266 (EVSK…SVGG), and 1287 to 1339 (ISSS…NNNN). Over residues 1055-1073 (VSGSNNNESSTAVSLNENK) the composition is skewed to polar residues. Low complexity predominate over residues 1107 to 1144 (SSSTSSSPSTLSAPQSPVGSTSPMGSTSTSPISNNNNR). Over residues 1145-1162 (PTHDHQQPHQVKWERIVP) the composition is skewed to basic and acidic residues. Low complexity-rich tracts occupy residues 1189–1232 (NNNN…SSGI), 1242–1266 (FLSS…SVGG), and 1295–1339 (NNNN…NNNN).

The protein belongs to the protein kinase superfamily. TKL Ser/Thr protein kinase family.

It catalyses the reaction L-seryl-[protein] + ATP = O-phospho-L-seryl-[protein] + ADP + H(+). It carries out the reaction L-threonyl-[protein] + ATP = O-phospho-L-threonyl-[protein] + ADP + H(+). The sequence is that of Probable serine/threonine-protein kinase DDB_G0268876 from Dictyostelium discoideum (Social amoeba).